Reading from the N-terminus, the 759-residue chain is LIM domain and actin-binding protein 1 (759 aa).

Met-1 carries the N-acetylmethionine modification. Phosphoserine is present on residues Ser-4, Ser-15, and Ser-55. The disordered stretch occupies residues 78–131 (NPGLGAESHTDSLRNSSTEIRHRADHPPAEVTSHAASGAKADQEEQIHPRSRLR). Over residues 96-105 (EIRHRADHPP) the composition is skewed to basic and acidic residues. Ser-132 carries the phosphoserine modification. The span at 146–177 (KDGEDLKDHSTESKKMENCLGESRHEVEKSEI) shows a compositional bias: basic and acidic residues. Positions 146–182 (KDGEDLKDHSTESKKMENCLGESRHEVEKSEISENTD) are disordered. The Required for interaction with NPC1L1 motif lies at 164-166 (CLG). Phosphoserine is present on residues Ala-183 and Ser-225. Disordered stretches follow at residues 211–264 (ILRA…RLSE) and 323–381 (EKIS…AMKK). Tyr-229 carries the post-translational modification Phosphotyrosine. Phosphoserine is present on residues Ser-230 and Ser-242. The segment covering 247-258 (DSEKNESRRNLE) has biased composition (basic and acidic residues). Ser-263, Ser-343, Ser-350, Ser-362, Ser-365, Ser-369, and Ser-374 each carry phosphoserine. A compositionally biased stretch (low complexity) spans 362-376 (SPDSRASSLSESSPP). Residues 388 to 448 (ETCVECQKTV…KPHFNQLFKS (61 aa)) form the LIM zinc-binding domain. Lys-439 is subject to N6-succinyllysine. A Phosphoserine modification is found at Ser-490. The tract at residues 493–513 (VEDAPIAKVGVLAASMEAKAS) is required for interaction with MYO5B. The interval 509-709 (EAKASSQQEK…QEPKSLNWSS (201 aa)) is disordered. Composition is skewed to basic and acidic residues over residues 516 to 527 (QEKEDKPAETKK) and 556 to 567 (WPPEDEISKPEV). The span at 595-607 (ASFQSTSVKSPKT) shows a compositional bias: polar residues. Residues Ser-601, Ser-604, Ser-609, and Ser-617 each carry the phosphoserine modification. The span at 644-655 (KNGNVGKTTWQN) shows a compositional bias: polar residues. Basic and acidic residues predominate over residues 656 to 673 (KESKGETGKRSKEGHSLE). A compositionally biased stretch (acidic residues) spans 674–691 (MENENLVENGADSDEDDN). Phosphoserine is present on residues Ser-686, Ser-692, Ser-698, Ser-726, and Ser-741. The span at 693–709 (FLKQQSPQEPKSLNWSS) shows a compositional bias: polar residues.

As to quaternary structure, interacts with NPC1L1; bridges NPC1L1 with MYO5B. Interacts with MYO5B; bridges NPC1L1 with MYO5B. Interacts with PXN; this complex stabilizes actin dynamics. Interacts with F-actin and G-actin. Interacts with LUZP1 (via C-terminus); both proteins restrict ciliation and may work together to regulate this process. Binds RAB40B (GTP-bound); interaction influences LIMA1 subcellular localization in lamellipodia during cell migration. Ubiquitinated by the ECS(RAB40B) complex leading to its degradation. Post-translationally, phosphorylation of the C-terminal region by MAPK1/MAPK3 reduces its association with F-actin and contributes to actin filament reorganization and enhances cell motility. As to expression, highly expressed in placenta, kidney, pancreas, prostate, ovary, spleen and heart. Also detected in lung, liver, brain, skeletal muscle, thymus, testis and intestine. Not detected in leukocytes. Isoform Beta expressed generally at very low levels. Isoform Alpha abundant in epithelial cells from mammary gland, prostate and in normal oral keratinocytes. Low levels in aortic endothelial cells and dermal fibroblasts. Not detectable in myocardium.

The protein localises to the cytoplasm. It localises to the cell junction. The protein resides in the focal adhesion. Its subcellular location is the cytoskeleton. It is found in the stress fiber. The protein localises to the cell membrane. It localises to the cell projection. The protein resides in the ruffle. Its subcellular location is the lamellipodium. Actin-binding protein involved in actin cytoskeleton regulation and dynamics. Increases the number and size of actin stress fibers and inhibits membrane ruffling. Inhibits actin filament depolymerization. Bundles actin filaments, delays filament nucleation and reduces formation of branched filaments. Acts as a negative regulator of primary cilium formation. Plays a role in cholesterol homeostasis. Influences plasma cholesterol levels through regulation of intestinal cholesterol absorption. May act as a scaffold protein by regulating NPC1L1 transportation, an essential protein for cholesterol absorption, to the plasma membrane by recruiting MYO5B to NPC1L1, and thus facilitates cholesterol uptake. This Homo sapiens (Human) protein is LIM domain and actin-binding protein 1.